Reading from the N-terminus, the 170-residue chain is Cytochrome P450 monooxygenase oryQ (170 aa).

Heme is bound at residue C85.

The protein belongs to the cytochrome P450 family. Requires heme as cofactor.

It participates in secondary metabolite biosynthesis. In terms of biological role, cytochrome P450 monooxygenase; part of the gene cluster that mediates the biosynthesis of oryzines, natural products with an unusual maleidride backbone. The two subunits of the fungal fatty acid synthase oryfasA and oryfasB probably form octenoic acid. This fatty acid is most likely activated by the acyl-CoA ligase oryP to give octenyl-CoA before the citrate synthase-like protein oryE catalyzes condensation with oxaloacetate to form tricarboxylic acid. The next steps of the pathways are conjectural, but a favorite possible route has been proposed, beginning with decarboxylation and concomitant dehydration by the decarboxylase oryM, followed by tautomerization, which may lead to the production of a diene intermediate. Reduction of this diene intermediate could give the known metabolite piliformic acid. On the pathway to oryzine B and oryzine A, however, hydroxylation of the diene by the alpha-ketoglutarate-dependent dioxygenase oryG and lactonisation by the lactonohydrolases oryH or oryL could give oryzine B directly. Finally, enoyl reduction by the dehydrogenase oryD would then convert oryzine B into oryzine A. This Aspergillus oryzae (strain ATCC 42149 / RIB 40) (Yellow koji mold) protein is Cytochrome P450 monooxygenase oryQ.